The chain runs to 546 residues: Branchpoint-bridging protein (546 aa).

Disordered regions lie at residues 1–141 and 178–199; these read MWRP…ASAK and TGDV…YDAY. Positions 50-128 are enriched in basic and acidic residues; it reads RQERERDARD…DRGDSNEDGP (79 aa). The KH domain maps to 251–330; it reads YIPVKEFPEI…SKVKTCVALI (80 aa). CCHC-type zinc fingers lie at residues 368 to 385 and 393 to 410; these read QLCQ…ECPQ and VICR…DCRG.

It belongs to the BBP/SF1 family.

Its subcellular location is the nucleus. In terms of biological role, necessary for the splicing of pre-mRNA. Has a role in the recognition of the branch site (5'-UACUAAC-3'), the pyrimidine tract and the 3'-splice site at the 3'-end of introns. This is Branchpoint-bridging protein (BBP) from Cryptococcus neoformans var. neoformans serotype D (strain B-3501A) (Filobasidiella neoformans).